A 169-amino-acid polypeptide reads, in one-letter code: Phosphopantetheine adenylyltransferase (169 aa).

Ser-10 contacts substrate. ATP contacts are provided by residues 10 to 11 and His-18; that span reads SF. Substrate is bound by residues Lys-42, Leu-74, and Arg-88. ATP contacts are provided by residues 89 to 91, Glu-99, and 124 to 130; these read GLR and YAFLSSS.

Belongs to the bacterial CoaD family. Homohexamer. It depends on Mg(2+) as a cofactor.

The protein resides in the cytoplasm. It catalyses the reaction (R)-4'-phosphopantetheine + ATP + H(+) = 3'-dephospho-CoA + diphosphate. It participates in cofactor biosynthesis; coenzyme A biosynthesis; CoA from (R)-pantothenate: step 4/5. Reversibly transfers an adenylyl group from ATP to 4'-phosphopantetheine, yielding dephospho-CoA (dPCoA) and pyrophosphate. This chain is Phosphopantetheine adenylyltransferase, found in Geobacillus sp. (strain WCH70).